We begin with the raw amino-acid sequence, 180 residues long: MASSSPILLMIIFSMWLLISHSESTDYLIGDSHNSWKVPLPSRRAFARWASAHEFTVGDTILFEYDNETESVHEVNEHDYIMCHTNGEHVEHHDGNTKVVLDKIGVYHFISGTKRHCKMGLKLAVVVQNKHDLVLPPLITMPMPPSPSPSPNSSGNKGGAAGLGFIMWLGVSLVMMMFLI.

Residues M1–S22 form the signal peptide. Positions T25–N129 constitute a Phytocyanin domain. An N-linked (GlcNAc...) asparagine glycan is attached at N67. Cysteines 83 and 117 form a disulfide. N-linked (GlcNAc...) asparagine glycosylation occurs at N152. A lipid anchor (GPI-anchor amidated serine) is attached at S154. A propeptide spans G155 to I180 (removed in mature form).

The protein belongs to the early nodulin-like (ENODL) family. As to expression, expressed in developing nodules upon symbiosis with Sinorhizobium meliloti.

Its subcellular location is the symbiosome. The protein localises to the cell membrane. In terms of biological role, may act as a carbohydrate transporter. The protein is Early nodulin-16 of Medicago truncatula (Barrel medic).